Reading from the N-terminus, the 104-residue chain is Large ribosomal subunit protein bL21 (104 aa).

This sequence belongs to the bacterial ribosomal protein bL21 family. As to quaternary structure, part of the 50S ribosomal subunit. Contacts protein L20.

Functionally, this protein binds to 23S rRNA in the presence of protein L20. This is Large ribosomal subunit protein bL21 from Granulibacter bethesdensis (strain ATCC BAA-1260 / CGDNIH1).